A 94-amino-acid chain; its full sequence is PqqA binding protein (94 aa).

The protein belongs to the PqqD family. As to quaternary structure, monomer. Interacts with PqqE.

Its pathway is cofactor biosynthesis; pyrroloquinoline quinone biosynthesis. In terms of biological role, functions as a PqqA binding protein and presents PqqA to PqqE, in the pyrroloquinoline quinone (PQQ) biosynthetic pathway. The chain is PqqA binding protein from Pseudomonas savastanoi pv. phaseolicola (strain 1448A / Race 6) (Pseudomonas syringae pv. phaseolicola (strain 1448A / Race 6)).